The chain runs to 363 residues: Ribosomal RNA large subunit methyltransferase M (363 aa).

S-adenosyl-L-methionine-binding positions include Ser194, 227–230, Asp246, Asp266, and Asp284; that span reads CPGG. Residue Lys313 is the Proton acceptor of the active site.

This sequence belongs to the class I-like SAM-binding methyltransferase superfamily. RNA methyltransferase RlmE family. RlmM subfamily. In terms of assembly, monomer.

It is found in the cytoplasm. The enzyme catalyses cytidine(2498) in 23S rRNA + S-adenosyl-L-methionine = 2'-O-methylcytidine(2498) in 23S rRNA + S-adenosyl-L-homocysteine + H(+). Functionally, catalyzes the 2'-O-methylation at nucleotide C2498 in 23S rRNA. In Mannheimia succiniciproducens (strain KCTC 0769BP / MBEL55E), this protein is Ribosomal RNA large subunit methyltransferase M.